The chain runs to 408 residues: Serine/threonine transporter SstT (408 aa).

The next 9 membrane-spanning stretches (helical) occupy residues Leu11–Ala31, Phe43–Leu63, Ile82–Met102, Ala141–Leu161, Ile192–Gly212, Leu216–Val236, Met298–Ile318, Ala339–Ile359, and Val363–Thr383.

The protein belongs to the dicarboxylate/amino acid:cation symporter (DAACS) (TC 2.A.23) family.

The protein resides in the cell inner membrane. The enzyme catalyses L-serine(in) + Na(+)(in) = L-serine(out) + Na(+)(out). It catalyses the reaction L-threonine(in) + Na(+)(in) = L-threonine(out) + Na(+)(out). Involved in the import of serine and threonine into the cell, with the concomitant import of sodium (symport system). This Shewanella sp. (strain MR-7) protein is Serine/threonine transporter SstT.